The primary structure comprises 190 residues: dCTP deaminase, dUMP-forming (190 aa).

Residues 101–106 (KSSLGR), Asp-119, 127–129 (TLE), Gln-148, Tyr-162, and Gln-174 each bind dCTP. The active-site Proton donor/acceptor is the Glu-129. The interval 161–190 (PYGSSGVGSKYQGQRGPTPSRSYQNFIRST) is disordered. Residues 171–190 (YQGQRGPTPSRSYQNFIRST) show a composition bias toward polar residues.

It belongs to the dCTP deaminase family. Homotrimer.

It carries out the reaction dCTP + 2 H2O = dUMP + NH4(+) + diphosphate. The protein operates within pyrimidine metabolism; dUMP biosynthesis; dUMP from dCTP: step 1/1. In terms of biological role, bifunctional enzyme that catalyzes both the deamination of dCTP to dUTP and the hydrolysis of dUTP to dUMP without releasing the toxic dUTP intermediate. The protein is dCTP deaminase, dUMP-forming of Mycobacterium marinum (strain ATCC BAA-535 / M).